The following is a 345-amino-acid chain: UDP-N-acetylenolpyruvoylglucosamine reductase (345 aa).

Residues Val-15–Lys-218 form the FAD-binding PCMH-type domain. Residue Arg-161 is part of the active site. The active-site Proton donor is the Ser-230. Glu-327 is a catalytic residue.

It belongs to the MurB family. Requires FAD as cofactor.

It is found in the cytoplasm. The enzyme catalyses UDP-N-acetyl-alpha-D-muramate + NADP(+) = UDP-N-acetyl-3-O-(1-carboxyvinyl)-alpha-D-glucosamine + NADPH + H(+). Its pathway is cell wall biogenesis; peptidoglycan biosynthesis. Cell wall formation. This chain is UDP-N-acetylenolpyruvoylglucosamine reductase, found in Blochmanniella floridana.